Reading from the N-terminus, the 211-residue chain is Xanthine phosphoribosyltransferase (211 aa).

Xanthine contacts are provided by Leu31 and Asn38. A 5-phospho-alpha-D-ribose 1-diphosphate-binding site is contributed by 138-142 (ANGRT). Xanthine is bound at residue Lys166.

This sequence belongs to the purine/pyrimidine phosphoribosyltransferase family. Xpt subfamily. As to quaternary structure, homodimer.

The protein localises to the cytoplasm. The enzyme catalyses XMP + diphosphate = xanthine + 5-phospho-alpha-D-ribose 1-diphosphate. Its pathway is purine metabolism; XMP biosynthesis via salvage pathway; XMP from xanthine: step 1/1. Its function is as follows. Converts the preformed base xanthine, a product of nucleic acid breakdown, to xanthosine 5'-monophosphate (XMP), so it can be reused for RNA or DNA synthesis. The polypeptide is Xanthine phosphoribosyltransferase (Chloroflexus aurantiacus (strain ATCC 29364 / DSM 637 / Y-400-fl)).